The sequence spans 42 residues: Statherin (42 aa).

Residues 1–6 are hydroxyapatite-binding; inhibits crystal growth; that stretch reads DSSEEK. Ser-2 and Ser-3 each carry phosphoserine. Positions 18 to 42 are disordered; sequence RYGPYQPFVPPPLYPQPYQPYQPQY. Residues 18 to 42 are hydrophobic; inhibits precipitation of calcium phosphate salts; that stretch reads RYGPYQPFVPPPLYPQPYQPYQPQY. A compositionally biased stretch (pro residues) spans 24–42; it reads PFVPPPLYPQPYQPYQPQY.

The protein belongs to the histatin/statherin family. As to expression, secreted by parotid and submandibular glands.

The protein resides in the secreted. Functionally, salivary protein that stabilizes saliva supersaturated with calcium salts by inhibiting the precipitation of calcium phosphate salts. It also modulates hydroxyapatite crystal formation on the tooth surface. The polypeptide is Statherin (STATH) (Macaca arctoides (Stump-tailed macaque)).